Consider the following 206-residue polypeptide: Large ribosomal subunit protein uL3 (206 aa).

A disordered region spans residues 126-155 (HGHAGGPGAHGSRFHRHPGSMGANSTPSRV).

This sequence belongs to the universal ribosomal protein uL3 family. As to quaternary structure, part of the 50S ribosomal subunit. Forms a cluster with proteins L14 and L19.

In terms of biological role, one of the primary rRNA binding proteins, it binds directly near the 3'-end of the 23S rRNA, where it nucleates assembly of the 50S subunit. The protein is Large ribosomal subunit protein uL3 of Leptospira interrogans serogroup Icterohaemorrhagiae serovar copenhageni (strain Fiocruz L1-130).